Consider the following 398-residue polypeptide: Enoyl-[acyl-carrier-protein] reductase [NADH] (398 aa).

NAD(+)-binding positions include 48 to 53, 74 to 75, 111 to 112, and 139 to 140; these read GASTGY, FE, DA, and LA. Y225 provides a ligand contact to substrate. Y235 acts as the Proton donor in catalysis. Residues K244 and 273-275 each bind NAD(+); that span reads VVT.

This sequence belongs to the TER reductase family. As to quaternary structure, monomer.

It catalyses the reaction a 2,3-saturated acyl-[ACP] + NAD(+) = a (2E)-enoyl-[ACP] + NADH + H(+). It functions in the pathway lipid metabolism; fatty acid biosynthesis. Functionally, involved in the final reduction of the elongation cycle of fatty acid synthesis (FAS II). Catalyzes the reduction of a carbon-carbon double bond in an enoyl moiety that is covalently linked to an acyl carrier protein (ACP). This Paraburkholderia xenovorans (strain LB400) protein is Enoyl-[acyl-carrier-protein] reductase [NADH].